We begin with the raw amino-acid sequence, 191 residues long: UPF0149 protein VV2847 (191 aa).

Belongs to the UPF0149 family.

This Vibrio vulnificus (strain YJ016) protein is UPF0149 protein VV2847.